The following is a 262-amino-acid chain: Ribosomal RNA small subunit methyltransferase A (262 aa).

S-adenosyl-L-methionine is bound by residues N20, L22, G47, E68, D90, and N110.

This sequence belongs to the class I-like SAM-binding methyltransferase superfamily. rRNA adenine N(6)-methyltransferase family. RsmA subfamily.

The protein resides in the cytoplasm. The enzyme catalyses adenosine(1518)/adenosine(1519) in 16S rRNA + 4 S-adenosyl-L-methionine = N(6)-dimethyladenosine(1518)/N(6)-dimethyladenosine(1519) in 16S rRNA + 4 S-adenosyl-L-homocysteine + 4 H(+). Its function is as follows. Specifically dimethylates two adjacent adenosines (A1518 and A1519) in the loop of a conserved hairpin near the 3'-end of 16S rRNA in the 30S particle. May play a critical role in biogenesis of 30S subunits. This is Ribosomal RNA small subunit methyltransferase A from Chlorobium phaeobacteroides (strain BS1).